Reading from the N-terminus, the 366-residue chain is Ribosomal RNA large subunit methyltransferase M (366 aa).

S-adenosyl-L-methionine contacts are provided by residues serine 188, 221–224 (CPGG), aspartate 240, aspartate 260, and aspartate 277. Lysine 306 serves as the catalytic Proton acceptor.

This sequence belongs to the class I-like SAM-binding methyltransferase superfamily. RNA methyltransferase RlmE family. RlmM subfamily. In terms of assembly, monomer.

The protein resides in the cytoplasm. The enzyme catalyses cytidine(2498) in 23S rRNA + S-adenosyl-L-methionine = 2'-O-methylcytidine(2498) in 23S rRNA + S-adenosyl-L-homocysteine + H(+). Its function is as follows. Catalyzes the 2'-O-methylation at nucleotide C2498 in 23S rRNA. This Citrobacter koseri (strain ATCC BAA-895 / CDC 4225-83 / SGSC4696) protein is Ribosomal RNA large subunit methyltransferase M.